Reading from the N-terminus, the 360-residue chain is Photosystem II protein D1 3 (360 aa).

The next 3 membrane-spanning stretches (helical) occupy residues 29 to 46, 118 to 133, and 142 to 156; these read YVGWFGVLMIPTLLAATI, HFLIGVFCYMGREWEL, and WICVAYSAPVAAATA. A chlorophyll a-binding site is contributed by His118. Position 126 (Tyr126) interacts with pheophytin a. [CaMn4O5] cluster-binding residues include Asp170 and Glu189. The chain crosses the membrane as a helical span at residues 197-218; the sequence is FHQLGVAGVFGGALFSAMHGSL. Residue His198 participates in chlorophyll a binding. A quinone contacts are provided by residues His215 and 264–265; that span reads SF. His215 lines the Fe cation pocket. Residue His272 participates in Fe cation binding. The chain crosses the membrane as a helical span at residues 274–288; that stretch reads FLAAWPVIGIWFTAL. The [CaMn4O5] cluster site is built by His332, Glu333, Asp342, and Ala344. Positions 345 to 360 are excised as a propeptide; that stretch reads SAESAPVAMIAPSING.

The protein belongs to the reaction center PufL/M/PsbA/D family. PSII is composed of 1 copy each of membrane proteins PsbA, PsbB, PsbC, PsbD, PsbE, PsbF, PsbH, PsbI, PsbJ, PsbK, PsbL, PsbM, PsbT, PsbX, PsbY, PsbZ, Psb30/Ycf12, peripheral proteins PsbO, CyanoQ (PsbQ), PsbU, PsbV and a large number of cofactors. It forms dimeric complexes. Precursor protein interacts with Ycf48. The cofactor is The D1/D2 heterodimer binds P680, chlorophylls that are the primary electron donor of PSII, and subsequent electron acceptors. It shares a non-heme iron and each subunit binds pheophytin, quinone, additional chlorophylls, carotenoids and lipids. D1 provides most of the ligands for the Mn4-Ca-O5 cluster of the oxygen-evolving complex (OEC). There is also a Cl(-1) ion associated with D1 and D2, which is required for oxygen evolution. The PSII complex binds additional chlorophylls, carotenoids and specific lipids.. In terms of processing, C-terminally processed by CtpA; processing is essential to allow assembly of the oxygen-evolving complex and thus photosynthetic growth. Post-translationally, tyr-161 forms a radical intermediate that is referred to as redox-active TyrZ, YZ or Y-Z.

It is found in the cellular thylakoid membrane. The catalysed reaction is 2 a plastoquinone + 4 hnu + 2 H2O = 2 a plastoquinol + O2. In terms of biological role, photosystem II (PSII) is a light-driven water:plastoquinone oxidoreductase that uses light energy to abstract electrons from H(2)O, generating O(2) and a proton gradient subsequently used for ATP formation. It consists of a core antenna complex that captures photons, and an electron transfer chain that converts photonic excitation into a charge separation. The D1/D2 (PsbA/PsbD) reaction center heterodimer binds P680, the primary electron donor of PSII as well as several subsequent electron acceptors. This Thermosynechococcus vestitus (strain NIES-2133 / IAM M-273 / BP-1) protein is Photosystem II protein D1 3.